The sequence spans 89 residues: Small ribosomal subunit protein uS15 (89 aa).

Positions 1 to 21 (MALTTEEKKQVLSEYGLHETD) are enriched in basic and acidic residues. The segment at 1–24 (MALTTEEKKQVLSEYGLHETDTGS) is disordered.

This sequence belongs to the universal ribosomal protein uS15 family. In terms of assembly, part of the 30S ribosomal subunit. Forms a bridge to the 50S subunit in the 70S ribosome, contacting the 23S rRNA.

In terms of biological role, one of the primary rRNA binding proteins, it binds directly to 16S rRNA where it helps nucleate assembly of the platform of the 30S subunit by binding and bridging several RNA helices of the 16S rRNA. Functionally, forms an intersubunit bridge (bridge B4) with the 23S rRNA of the 50S subunit in the ribosome. This chain is Small ribosomal subunit protein uS15, found in Rhodococcus jostii (strain RHA1).